The sequence spans 291 residues: Protease HtpX (291 aa).

2 consecutive transmembrane segments (helical) span residues 4 to 24 (IVIF…LLTC) and 37 to 57 (IISG…SKFI). His-139 is a Zn(2+) binding site. The active site involves Glu-140. Residue His-143 participates in Zn(2+) binding. 2 helical membrane-spanning segments follow: residues 147–167 (GDMV…IFIS) and 195–215 (IVST…VLWF). Position 220 (Glu-220) interacts with Zn(2+).

Belongs to the peptidase M48B family. Requires Zn(2+) as cofactor.

It localises to the cell membrane. The sequence is that of Protease HtpX from Baumannia cicadellinicola subsp. Homalodisca coagulata.